The sequence spans 83 residues: Three-finger toxin MALT0066C (83 aa).

An N-terminal signal peptide occupies residues methionine 1–threonine 21. Disulfide bonds link cysteine 24–cysteine 45, cysteine 38–cysteine 62, cysteine 64–cysteine 75, and cysteine 76–cysteine 81.

The protein belongs to the three-finger toxin family. Short-chain subfamily. Type I alpha-neurotoxin sub-subfamily. In terms of assembly, dimer. As to expression, expressed by the venom gland.

It localises to the secreted. Its function is as follows. Binds to muscle nicotinic acetylcholine receptor (nAChR) and inhibit acetylcholine from binding to the receptor, thereby impairing neuromuscular transmission. In Micrurus altirostris (Uruguayan coral snake), this protein is Three-finger toxin MALT0066C.